The following is a 159-amino-acid chain: ATP synthase subunit b 1 (159 aa).

Residues 5–25 (FWAFIGLILFLALLFYFKVPA) form a helical membrane-spanning segment.

This sequence belongs to the ATPase B chain family. In terms of assembly, F-type ATPases have 2 components, F(1) - the catalytic core - and F(0) - the membrane proton channel. F(1) has five subunits: alpha(3), beta(3), gamma(1), delta(1), epsilon(1). F(0) has three main subunits: a(1), b(2) and c(10-14). The alpha and beta chains form an alternating ring which encloses part of the gamma chain. F(1) is attached to F(0) by a central stalk formed by the gamma and epsilon chains, while a peripheral stalk is formed by the delta and b chains.

Its subcellular location is the cell inner membrane. F(1)F(0) ATP synthase produces ATP from ADP in the presence of a proton or sodium gradient. F-type ATPases consist of two structural domains, F(1) containing the extramembraneous catalytic core and F(0) containing the membrane proton channel, linked together by a central stalk and a peripheral stalk. During catalysis, ATP synthesis in the catalytic domain of F(1) is coupled via a rotary mechanism of the central stalk subunits to proton translocation. Functionally, component of the F(0) channel, it forms part of the peripheral stalk, linking F(1) to F(0). The polypeptide is ATP synthase subunit b 1 (Bartonella bacilliformis (strain ATCC 35685 / KC583 / Herrer 020/F12,63)).